The chain runs to 86 residues: Protein P17 (86 aa).

The interval 63–86 (SPAEKPDNQPELTGITFEGDNNDQ) is disordered.

As to quaternary structure, homotetramer.

In terms of biological role, assembly protein that acts late in phage assembly, after capsid protein folding and multimerization, and sorting of membrane proteins has occurred. The major coat protein P3 and two assembly factors (P10 and P17) are needed during the assembly of the virus particle inside the host cell, when the capsid protein multimers are capable of enclosing the host-derived membrane, containing the virus-encoded membrane-associated proteins. The protein is Protein P17 (XVII) of Enterobacteria phage PRD1 (Bacteriophage PRD1).